An 82-amino-acid polypeptide reads, in one-letter code: MMAKLMITVMMVLLLSLQQGADGRSERWRKNQMAASRIMRNLITARGDPPRFCVHKICYEDSECNQWCTGGCNPTQGKCDTA.

The first 23 residues, M1–G23, serve as a signal peptide directing secretion. The propeptide occupies R24–R46. 4-hydroxyproline occurs at positions 49 and 50. Intrachain disulfides connect C53–C68, C58–C72, and C64–C79. A 4-carboxyglutamate mark is found at E60 and E63.

This sequence belongs to the Pg turripeptide superfamily. As to expression, expressed by the venom duct.

The protein resides in the secreted. This is Turripeptide Gdm9.1 from Gemmula diomedea (Gem-turris).